We begin with the raw amino-acid sequence, 258 residues long: 3-deoxy-manno-octulosonate cytidylyltransferase (258 aa).

Belongs to the KdsB family.

The protein localises to the cytoplasm. It catalyses the reaction 3-deoxy-alpha-D-manno-oct-2-ulosonate + CTP = CMP-3-deoxy-beta-D-manno-octulosonate + diphosphate. The protein operates within nucleotide-sugar biosynthesis; CMP-3-deoxy-D-manno-octulosonate biosynthesis; CMP-3-deoxy-D-manno-octulosonate from 3-deoxy-D-manno-octulosonate and CTP: step 1/1. It functions in the pathway bacterial outer membrane biogenesis; lipopolysaccharide biosynthesis. Functionally, activates KDO (a required 8-carbon sugar) for incorporation into bacterial lipopolysaccharide in Gram-negative bacteria. This chain is 3-deoxy-manno-octulosonate cytidylyltransferase, found in Gemmatimonas aurantiaca (strain DSM 14586 / JCM 11422 / NBRC 100505 / T-27).